A 276-amino-acid polypeptide reads, in one-letter code: NAD-capped RNA hydrolase NudC (276 aa).

Arginine 82 is a substrate binding site. Zn(2+) contacts are provided by cysteine 112 and cysteine 115. Glutamate 125 lines the substrate pocket. Residues cysteine 130 and cysteine 133 each contribute to the Zn(2+) site. Residue tyrosine 138 participates in substrate binding. Positions 139–262 (PRLSPSMIVL…SIARYLIELY (124 aa)) constitute a Nudix hydrolase domain. 3 residues coordinate a divalent metal cation: alanine 172, glutamate 188, and glutamate 192. Positions 173–194 (GYVEPGESVEQCVAREVREEVG) match the Nudix box motif. Residue 206 to 213 (QGWPFPHS) participates in substrate binding. Glutamate 233 is an a divalent metal cation binding site. Alanine 255 contacts substrate.

It belongs to the Nudix hydrolase family. NudC subfamily. As to quaternary structure, homodimer. Mg(2+) is required as a cofactor. Requires Mn(2+) as cofactor. It depends on Zn(2+) as a cofactor.

The catalysed reaction is a 5'-end NAD(+)-phospho-ribonucleoside in mRNA + H2O = a 5'-end phospho-adenosine-phospho-ribonucleoside in mRNA + beta-nicotinamide D-ribonucleotide + 2 H(+). It catalyses the reaction NAD(+) + H2O = beta-nicotinamide D-ribonucleotide + AMP + 2 H(+). It carries out the reaction NADH + H2O = reduced beta-nicotinamide D-ribonucleotide + AMP + 2 H(+). In terms of biological role, mRNA decapping enzyme that specifically removes the nicotinamide adenine dinucleotide (NAD) cap from a subset of mRNAs by hydrolyzing the diphosphate linkage to produce nicotinamide mononucleotide (NMN) and 5' monophosphate mRNA. The NAD-cap is present at the 5'-end of some mRNAs and stabilizes RNA against 5'-processing. Has preference for mRNAs with a 5'-end purine. Catalyzes the hydrolysis of a broad range of dinucleotide pyrophosphates. The chain is NAD-capped RNA hydrolase NudC from Stutzerimonas stutzeri (strain A1501) (Pseudomonas stutzeri).